Here is a 311-residue protein sequence, read N- to C-terminus: D-alanine--D-alanine ligase (311 aa).

The ATP-grasp domain occupies 106–301 (KLLWRGAELP…FDELCWRILL (196 aa)). Residue 132-187 (IGSVGLPLMIKPAHEGSSIGMAKVERPEELEAARAEAARYDDLVLAERWIEGGEYT) participates in ATP binding. Residues D255, E268, and N270 each contribute to the Mg(2+) site.

The protein belongs to the D-alanine--D-alanine ligase family. Requires Mg(2+) as cofactor. Mn(2+) is required as a cofactor.

The protein localises to the cytoplasm. It catalyses the reaction 2 D-alanine + ATP = D-alanyl-D-alanine + ADP + phosphate + H(+). The protein operates within cell wall biogenesis; peptidoglycan biosynthesis. Functionally, cell wall formation. In Alkalilimnicola ehrlichii (strain ATCC BAA-1101 / DSM 17681 / MLHE-1), this protein is D-alanine--D-alanine ligase.